A 166-amino-acid chain; its full sequence is Small ribosomal subunit protein uS5 (166 aa).

The S5 DRBM domain maps to 11 to 74; it reads LEDRVVAINR…EDAKKNLVEV (64 aa).

Belongs to the universal ribosomal protein uS5 family. In terms of assembly, part of the 30S ribosomal subunit. Contacts proteins S4 and S8.

With S4 and S12 plays an important role in translational accuracy. In terms of biological role, located at the back of the 30S subunit body where it stabilizes the conformation of the head with respect to the body. In Enterococcus faecalis (strain ATCC 700802 / V583), this protein is Small ribosomal subunit protein uS5.